The sequence spans 313 residues: Pyrimidine-specific ribonucleoside hydrolase RihB (313 aa).

Asp11 serves as the catalytic Proton acceptor. Ca(2+) is bound by residues Asp11, Asp16, and Val124. 2 residues coordinate substrate: Gln227 and His239. Position 240 (Asp240) interacts with Ca(2+).

Belongs to the IUNH family. RihB subfamily. In terms of assembly, homotetramer. The cofactor is Ca(2+).

It catalyses the reaction a pyrimidine ribonucleoside + H2O = a pyrimidine nucleobase + D-ribose. Functionally, hydrolyzes cytidine or uridine to ribose and cytosine or uracil, respectively. Has a clear preference for cytidine over uridine. Strictly specific for ribonucleosides. The chain is Pyrimidine-specific ribonucleoside hydrolase RihB from Escherichia coli O157:H7.